The following is a 426-amino-acid chain: Alpha/beta hydrolase pydG (426 aa).

Belongs to the AB hydrolase superfamily. In terms of assembly, homodimer.

Its pathway is mycotoxin biosynthesis. Alpha/beta hydrolasee; part of the gene cluster that mediates the biosynthesis of pyrrocidines, fungal natural products containing a macrocyclic para-cyclophane connected to a decahydrofluorene ring system that show potent antibiotic activities toward Gram-negative bacteria. Within the pathway, pydG catalyzes the Knoevenagel condensation that affords the 3-pyrrolin-2-one ring, using as substrate the polyketide-tyrosyl acyl thioester product of pydA. The pathway begins with the PKS-NRPS pydA which, with the help of the trans-enoyl reductase pydC, synthesizes the polyketide-tyrosyl acyl thioester product which can be reductively off-loaded by the terminal reductase (R) domain in pydA. The alpha/beta hydrolase pydG is then required to catalyze the subsequent Knoevenagel condensation that affords the 3-pyrrolin-2-one ring, whereas the four proteins pydB, pydE, pydX and pydZ then function synergistically to form the cyclophane. PydB and the membrane-bound pydX and pydZ are lipid-binding proteins that can sequester and mold the pdyG product into the inverse S-shape. Binding of the medium chain reductase pydE to the complex would trigger the cascade oxidative cyclization. PydY is involved in the Diels-Alder cycloaddition that forms the decahydrofluorene core. Additional non-enzymatic hydroxylation yields pyrrocidine A2 which can be further reduced into pyrrocidine B by an endogenous reductase. This Acremonium sp protein is Alpha/beta hydrolase pydG.